The sequence spans 261 residues: Carnitinyl-CoA dehydratase (261 aa).

The active-site Nucleophile is E111. Catalysis depends on E131, which acts as the Proton acceptor.

It belongs to the enoyl-CoA hydratase/isomerase family.

The enzyme catalyses (R)-carnitinyl-CoA = crotonobetainyl-CoA + H2O. The protein operates within amine and polyamine metabolism; carnitine metabolism. In terms of biological role, catalyzes the reversible dehydration of L-carnitinyl-CoA to crotonobetainyl-CoA. The polypeptide is Carnitinyl-CoA dehydratase (Salmonella typhimurium (strain LT2 / SGSC1412 / ATCC 700720)).